The primary structure comprises 180 residues: ATP synthase subunit delta, chloroplastic (180 aa).

This sequence belongs to the ATPase delta chain family. As to quaternary structure, F-type ATPases have 2 components, F(1) - the catalytic core - and F(0) - the membrane proton channel. F(1) has five subunits: alpha(3), beta(3), gamma(1), delta(1), epsilon(1). CF(0) has four main subunits: a(1), b(1), b'(1) and c(10-14). The alpha and beta chains form an alternating ring which encloses part of the gamma chain. F(1) is attached to F(0) by a central stalk formed by the gamma and epsilon chains, while a peripheral stalk is formed by the delta, b and b' chains.

It is found in the plastid. Its subcellular location is the chloroplast thylakoid membrane. Functionally, f(1)F(0) ATP synthase produces ATP from ADP in the presence of a proton or sodium gradient. F-type ATPases consist of two structural domains, F(1) containing the extramembraneous catalytic core and F(0) containing the membrane proton channel, linked together by a central stalk and a peripheral stalk. During catalysis, ATP synthesis in the catalytic domain of F(1) is coupled via a rotary mechanism of the central stalk subunits to proton translocation. In terms of biological role, this protein is part of the stalk that links CF(0) to CF(1). It either transmits conformational changes from CF(0) to CF(1) or is implicated in proton conduction. This Emiliania huxleyi (Coccolithophore) protein is ATP synthase subunit delta, chloroplastic.